The sequence spans 223 residues: Ribose-5-phosphate isomerase A (223 aa).

Substrate is bound by residues 32–35 (TGST), 85–88 (DGAD), and 98–101 (KGGG). Glu107 acts as the Proton acceptor in catalysis. Lys125 contributes to the substrate binding site.

Belongs to the ribose 5-phosphate isomerase family. As to quaternary structure, homodimer.

It catalyses the reaction aldehydo-D-ribose 5-phosphate = D-ribulose 5-phosphate. The protein operates within carbohydrate degradation; pentose phosphate pathway; D-ribose 5-phosphate from D-ribulose 5-phosphate (non-oxidative stage): step 1/1. In terms of biological role, catalyzes the reversible conversion of ribose-5-phosphate to ribulose 5-phosphate. The chain is Ribose-5-phosphate isomerase A from Stutzerimonas stutzeri (strain A1501) (Pseudomonas stutzeri).